We begin with the raw amino-acid sequence, 351 residues long: Formyl peptide receptor 2 (351 aa).

At 1–29 (MESNYSIHLNGSEVVVYDSTISRVLWILS) the chain is on the extracellular side. Residues N4 and N10 are each glycosylated (N-linked (GlcNAc...) asparagine). The chain crosses the membrane as a helical span at residues 30–50 (MVVVSITFFLGVLGNGLVIWV). At 51 to 61 (AGFRMPHTVTT) the chain is on the cytoplasmic side. Residues 62–82 (IWYLNLALADFSFTATLPFLL) traverse the membrane as a helical segment. At 83 to 99 (VEMAMKEKWPFGWFLCK) the chain is on the extracellular side. A disulfide bridge connects residues C98 and C176. Residues 100-120 (LVHIVVDVNLFGSVFLIALIA) form a helical membrane-spanning segment. The Cytoplasmic segment spans residues 121–144 (LDRCICVLHPVWAQNHRTVSLARK). The helical transmembrane segment at 145 to 165 (VVVGPWIFALILTLPIFIFLT) threads the bilayer. Topologically, residues 166-205 (TVRIPGGDVYCTFNFGSWAQTDEEKLNTAITFVTTRGIIR) are extracellular. Residues 206–226 (FLIGFSMPMSIVAVCYGLIAV) form a helical membrane-spanning segment. At 227–241 (KINRRNLVNSSRPLR) the chain is on the cytoplasmic side. The chain crosses the membrane as a helical span at residues 242–262 (VLTAVVASFFICWFPFQLVAL). Over 263–282 (LGTVWFKETLLSGSYKILDM) the chain is Extracellular. A helical membrane pass occupies residues 283-305 (FVNPTSSLAYFNSCLNPMLYVFM). The Cytoplasmic portion of the chain corresponds to 306-351 (GQDFRERFIHSLPYSLERALSEDSGQTSDSSTSSTSPPADIELKAP). Residues 325-351 (LSEDSGQTSDSSTSSTSPPADIELKAP) are disordered. A compositionally biased stretch (low complexity) spans 327–341 (EDSGQTSDSSTSSTS).

Belongs to the G-protein coupled receptor 1 family. In terms of assembly, interacts with Amyloid-beta protein 42, product of APP; the interaction takes place at the cell surface and the complex is then rapidly internalized. Primarily expressed in neutrophils. Not detected in vomeronasal neurons.

The protein localises to the cell membrane. Its function is as follows. High affinity receptor for N-formyl-methionyl peptides (FMLP), which are powerful neutrophil chemotactic factors. Stimulates chemotaxis in immune cells to site of infection or tissue damage upon recognition of several ligands, such as FMLP, or ligand involved in cell damage, disease or inflammation. Receptor for the chemokine-like protein FAM19A5, mediating FAM19A5-stimulated macrophage chemotaxis and the inhibitory effect on TNFSF11/RANKL-induced osteoclast differentiation. The sequence is that of Formyl peptide receptor 2 (Fpr2) from Mus musculus (Mouse).